The following is a 496-amino-acid chain: MPQLHDSGSRAIQPSDQTHQHDFARIFGIETEYGVSVTDIPEPMDASHVAMTMFQPVVRRARSTNTYVENGSRLYLDVGSHPEYATAEAICPSDALLSDLAGEQTMRSMGLDAQRRLRESDAQNRHATLHLYKNNADSAGHSFGCHENYLVRRFVNLDMIQHVLLPFLITRQIYTGAGRFDGERLLFTQRAAFVDETVSSATTRSRPMINTRDEPHANPDDYRRLHVIIGDSNRSQWATLMKCATTHLVLCMMEHAARSGCETELEAFALADPIAANHAINTDGAHARIALAAGRSTTALELQQMMLEQVESFAAHHGDALEASLRYDALCNVEWIVGQWRWVLDRLAANDIETLSHVVDWASKQVFFNRLQSRGTVTPARLRQLDLDYHDIANGRLYPSLCAHGLMRTLVDADQIHDAVSTPPPHTRAVLRGRFVAAASHTDAVYDCDWTTLKLVRPVHMEAVLLDPFHDEPTKQYDKLMGELGDARADGDEAPV.

Mg(2+) is bound at residue E30. ATP is bound at residue R73. A Mg(2+)-binding site is contributed by Y75. The active-site Proton acceptor is the D77. Position 83 (E83) interacts with Mg(2+). T86 and W450 together coordinate ATP.

It belongs to the Pup ligase/Pup deamidase family. Pup-conjugating enzyme subfamily.

It carries out the reaction ATP + [prokaryotic ubiquitin-like protein]-L-glutamate + [protein]-L-lysine = ADP + phosphate + N(6)-([prokaryotic ubiquitin-like protein]-gamma-L-glutamyl)-[protein]-L-lysine.. It functions in the pathway protein degradation; proteasomal Pup-dependent pathway. The protein operates within protein modification; protein pupylation. Catalyzes the covalent attachment of the prokaryotic ubiquitin-like protein modifier Pup to the proteasomal substrate proteins, thereby targeting them for proteasomal degradation. This tagging system is termed pupylation. The ligation reaction involves the side-chain carboxylate of the C-terminal glutamate of Pup and the side-chain amino group of a substrate lysine. The sequence is that of Pup--protein ligase from Bifidobacterium animalis subsp. lactis (strain AD011).